The primary structure comprises 429 residues: Histidine--tRNA ligase (429 aa).

Belongs to the class-II aminoacyl-tRNA synthetase family. Homodimer.

It is found in the cytoplasm. The catalysed reaction is tRNA(His) + L-histidine + ATP = L-histidyl-tRNA(His) + AMP + diphosphate + H(+). This chain is Histidine--tRNA ligase, found in Pseudomonas aeruginosa (strain LESB58).